A 368-amino-acid chain; its full sequence is DNA-dependent metalloprotease dvc-1 (368 aa).

A SprT-like domain is found at 21-190 (HALFIQFDAR…QSCGGNFLKV (170 aa)). H89 provides a ligand contact to Zn(2+). E90 is a catalytic residue. Positions 93 and 108 each coordinate Zn(2+). The segment at 187 to 309 (FLKVKEPEGY…PVNFTSPSSA (123 aa)) is disordered. Residues 226-237 (TLDDFFKKDGKN) show a composition bias toward basic and acidic residues. Residues 238–274 (SSDNSTSKSPTKPSTSLFTGSGQKLGGSSSTSSLLNS) are compositionally biased toward low complexity. The UBZ4-type zinc-finger motif lies at 344 to 368 (SVICPSCNTEVMENLIHGHLDYCLG). Zn(2+) contacts are provided by C347, C350, H362, and C366.

The protein belongs to the Spartan family. In terms of assembly, interacts with vcp/p97 (cdc-48.1 or cdc-48.2).

Its subcellular location is the nucleus. It is found in the chromosome. DNA-dependent metalloendopeptidase that mediates the proteolytic cleavage of covalent DNA-protein cross-links (DPCs) during DNA synthesis, thereby playing a key role in maintaining genomic integrity. DPCs are highly toxic DNA lesions that interfere with essential chromatin transactions, such as replication and transcription, and which are induced by reactive agents, such as UV light or formaldehyde. Associates with the DNA replication machinery and specifically removes DPCs during DNA synthesis. Regulator of UV-induced DNA damage response: required to protect genome stability during DNA replication, possibly via recruitment of vcp/p97 (cdc-48.1 or cdc-48.2) recruitment. This Caenorhabditis elegans protein is DNA-dependent metalloprotease dvc-1.